Here is a 549-residue protein sequence, read N- to C-terminus: MAELTISANDIQSAIEEYVGSFTSDTSREEVGTVVDAGDGIAHVEGLPSVMTQELLEFPGGVLGVALNLDEHSVGAVILGNSENIEEGQQVKRTGEVLSVPVGDAFLGRVINPLGQPIDGRGDIKAETRRALELQAPSVVQRQSVKEPLQTGIKAIDAMTPIGRGQRQLIIGDRKTGKTAVCVDTILNQRQNWETGDPKKQVRCVYVAVGQKGTTIASVRRALEEGGAMDYTTIVAAPASDSAGFKWLAPYTGSAVAQHWMYDGKHVLIVFDDLTKQAEAYRAISLLLRRPPGREAYPGDVFYLHSRLLERCAKLSDELGGGSLTGLPIIETKANDISAYIPTNVISITDGQCFLETDLFNQGVRPAINVGVSVSRVGGAAQIKAIKEVAGSLRLDLSQYRELEAFAAFASDLDATSKAQLDRGARLVELLKQPQYQPMPVEEQVISIFLGTGGHLDSVPVEDVRRFETELLDHIRASEENLLSTIRDTQKLTEETEEALTKVINHFKKGFASSTGESVVPDEHVEAMDEEDLGKESVKVKKPAPQKKK.

172–179 lines the ATP pocket; that stretch reads GDRKTGKT. The disordered stretch occupies residues 513-549; the sequence is SSTGESVVPDEHVEAMDEEDLGKESVKVKKPAPQKKK. Basic residues predominate over residues 540–549; it reads VKKPAPQKKK.

The protein belongs to the ATPase alpha/beta chains family. As to quaternary structure, F-type ATPases have 2 components, CF(1) - the catalytic core - and CF(0) - the membrane proton channel. CF(1) has five subunits: alpha(3), beta(3), gamma(1), delta(1), epsilon(1). CF(0) has three main subunits: a(1), b(2) and c(9-12). The alpha and beta chains form an alternating ring which encloses part of the gamma chain. CF(1) is attached to CF(0) by a central stalk formed by the gamma and epsilon chains, while a peripheral stalk is formed by the delta and b chains.

The protein localises to the cell membrane. It carries out the reaction ATP + H2O + 4 H(+)(in) = ADP + phosphate + 5 H(+)(out). Its function is as follows. Produces ATP from ADP in the presence of a proton gradient across the membrane. The alpha chain is a regulatory subunit. The polypeptide is ATP synthase subunit alpha (Mycobacterium ulcerans (strain Agy99)).